The following is a 327-amino-acid chain: 2-keto-3-deoxygluconate permease (327 aa).

10 helical membrane-spanning segments follow: residues 10 to 30 (IPGGMMLVPLFLGALCHTFSP), 42 to 62 (GMITGTVPILAVWFFCMGASI), 73 to 93 (KSGTLVVTKIAVAWVVAAIAS), 95 to 115 (IIPEHGVEVGFFAGLSTLALV), 139 to 159 (AGAFVLMSLESGPLMTMIILG), 163 to 183 (IASFEPHVFVGAVLPFLVGFA), 199 to 219 (VQTLIPFFAFALGNTIDLTVI), 224 to 244 (LLGILLGVAVIIVTGIPLIIA), 254 to 274 (TAGIAASSSAGAAVATPVLIA), and 289 to 309 (SLVATAVIVTSILVPILTSIW).

It belongs to the KdgT transporter family.

The protein resides in the cell inner membrane. The enzyme catalyses 2-dehydro-3-deoxy-D-gluconate(in) + H(+)(in) = 2-dehydro-3-deoxy-D-gluconate(out) + H(+)(out). In terms of biological role, catalyzes the proton-dependent uptake of 2-keto-3-deoxygluconate (KDG) into the cell. This chain is 2-keto-3-deoxygluconate permease, found in Escherichia coli O157:H7.